A 487-amino-acid chain; its full sequence is MTLFERSAKELQAEIKAGNLSIADLTKEAYERIAKLDGDVQAFLASNEEKATAQAAEMDKVPFEERGPLFGLPIGVKDNIVTEGLETTCASKILEGFMPIYDATVVNKLREAGMITVGKLNMDEFAMGSSNENSYYKTTKNPWNLNHVPGGSSGASAASVAAGEVPFSLGSDTGGSIRQPAAYCGVVGMKPTYGRVSRFGLVAFASSLDQIGPITRNVEDNALLLEAIAGLDPNDSTSADVEVPNYAAALTGDVKGLRIAVPKEFLGEGVGEAARQSVLAALEVLKGLGATVEEVSLPHSKYALAAYYILSSSEASSNLSRFDGIRYGFRAENVTNLMDLYKETRAQGFGDEVKRRIMLGTYSLSAGTYDAYYKKAQQARTLIKADYDKVFEDFDVIIGPTSPTPAFKIGENVDDPMTMYANDILTIPMNLAGVPAISIPCGFDNGLPLGLQIIGKYFDEATIYRVAHAFEQATEFHKQVPQMWEGK.

Residues Lys77 and Ser152 each act as charge relay system in the active site. Catalysis depends on Ser176, which acts as the Acyl-ester intermediate.

The protein belongs to the amidase family. GatA subfamily. As to quaternary structure, heterotrimer of A, B and C subunits.

The catalysed reaction is L-glutamyl-tRNA(Gln) + L-glutamine + ATP + H2O = L-glutaminyl-tRNA(Gln) + L-glutamate + ADP + phosphate + H(+). Functionally, allows the formation of correctly charged Gln-tRNA(Gln) through the transamidation of misacylated Glu-tRNA(Gln) in organisms which lack glutaminyl-tRNA synthetase. The reaction takes place in the presence of glutamine and ATP through an activated gamma-phospho-Glu-tRNA(Gln). The sequence is that of Glutamyl-tRNA(Gln) amidotransferase subunit A from Lysinibacillus sphaericus (strain C3-41).